The following is a 128-amino-acid chain: T-cell leukemia/lymphoma protein 1B (128 aa).

Belongs to the TCL1 family. Interacts with AKT1 and AKT2 (via PH domain). Does not interact with AKT3. In terms of tissue distribution, expressed in a variety of tissues including placenta and testis.

In terms of biological role, enhances the phosphorylation and activation of AKT1 and AKT2. The protein is T-cell leukemia/lymphoma protein 1B (TCL1B) of Homo sapiens (Human).